The following is a 157-amino-acid chain: Ribosomal RNA large subunit methyltransferase H (157 aa).

S-adenosyl-L-methionine contacts are provided by residues Leu-73, Gly-104, and 121-126 (LSPLTL).

Belongs to the RNA methyltransferase RlmH family. In terms of assembly, homodimer.

The protein resides in the cytoplasm. It carries out the reaction pseudouridine(1915) in 23S rRNA + S-adenosyl-L-methionine = N(3)-methylpseudouridine(1915) in 23S rRNA + S-adenosyl-L-homocysteine + H(+). Its function is as follows. Specifically methylates the pseudouridine at position 1915 (m3Psi1915) in 23S rRNA. The sequence is that of Ribosomal RNA large subunit methyltransferase H from Acidithiobacillus ferrooxidans (strain ATCC 23270 / DSM 14882 / CIP 104768 / NCIMB 8455) (Ferrobacillus ferrooxidans (strain ATCC 23270)).